A 436-amino-acid polypeptide reads, in one-letter code: uncharacterized protein (436 aa).

The N-terminal stretch at 1 to 19 is a signal peptide; sequence MKKLLLASIIGLASTTSFA.

This is an uncharacterized protein from Rickettsia bellii (strain RML369-C).